The primary structure comprises 368 residues: Phosphate acyltransferase (368 aa).

The interval 334 to 368 is disordered; that stretch reads EGSLEQAARDASGAGHASPIAGQPAEPYAAQSSKA.

The protein belongs to the PlsX family. In terms of assembly, homodimer. Probably interacts with PlsY.

It localises to the cytoplasm. It carries out the reaction a fatty acyl-[ACP] + phosphate = an acyl phosphate + holo-[ACP]. It functions in the pathway lipid metabolism; phospholipid metabolism. Catalyzes the reversible formation of acyl-phosphate (acyl-PO(4)) from acyl-[acyl-carrier-protein] (acyl-ACP). This enzyme utilizes acyl-ACP as fatty acyl donor, but not acyl-CoA. The chain is Phosphate acyltransferase from Paraburkholderia xenovorans (strain LB400).